The chain runs to 20 residues: Non-specific lipid-transfer protein (20 aa).

It belongs to the plant LTP family. In terms of tissue distribution, leaf.

In terms of biological role, plant non-specific lipid-transfer proteins transfer phospholipids as well as galactolipids across membranes. May play a role in wax or cutin deposition in the cell walls of expanding epidermal cells and certain secretory tissues. The chain is Non-specific lipid-transfer protein from Cannabis sativa (Hemp).